The chain runs to 82 residues: uncharacterized protein (82 aa).

The span at 29 to 38 (TATKSTSSGS) shows a compositional bias: low complexity. The tract at residues 29–64 (TATKSTSSGSVPSFFTESTSTPLNQSKTNTSTLNKS) is disordered. Over residues 39–50 (VPSFFTESTSTP) the composition is skewed to polar residues. Residues 51 to 64 (LNQSKTNTSTLNKS) are compositionally biased toward low complexity.

This is an uncharacterized protein from Dictyostelium discoideum (Social amoeba).